Consider the following 345-residue polypeptide: MSTPTQLSYKDAGVDIDAGNALVDNIKTAVKRTHRPEIMGNLGGFGALCELPTKYKHPVLVSGTDGVGTKLRLAIDHKKHDTVGIDLVAMCSNDLIVSGAEPLFFLDYYATGKLDVEAATSVVKGIAEGCVQSGCALIGGETAEMPGMYEGDDYDLAGFCVGVVEKADIIDGSKVVAGDSLIALASSGPHSNGFSLIRKVLEVSEADPQLNLEGKPLIDHLLEPTKIYVKSLLKLLEQTDVHAMAHITGGGFWENIPRVLPEDCKAVVKGDSWQWPTVFNWLMENGNIAEFEMYRTFNCGVGMVVALPSEKVDAALTLLNAEGENAWLIGDIAKRNGDEEQVEIL.

It belongs to the AIR synthase family.

The protein resides in the cytoplasm. The enzyme catalyses 2-formamido-N(1)-(5-O-phospho-beta-D-ribosyl)acetamidine + ATP = 5-amino-1-(5-phospho-beta-D-ribosyl)imidazole + ADP + phosphate + H(+). The protein operates within purine metabolism; IMP biosynthesis via de novo pathway; 5-amino-1-(5-phospho-D-ribosyl)imidazole from N(2)-formyl-N(1)-(5-phospho-D-ribosyl)glycinamide: step 2/2. The protein is Phosphoribosylformylglycinamidine cyclo-ligase of Shewanella sediminis (strain HAW-EB3).